Reading from the N-terminus, the 101-residue chain is CRISPR-associated endoribonuclease Cas2 (101 aa).

Residue aspartate 8 coordinates Mg(2+).

This sequence belongs to the CRISPR-associated endoribonuclease Cas2 protein family. In terms of assembly, homodimer, forms a heterotetramer with a Cas1 homodimer. Mg(2+) serves as cofactor.

In terms of biological role, CRISPR (clustered regularly interspaced short palindromic repeat), is an adaptive immune system that provides protection against mobile genetic elements (viruses, transposable elements and conjugative plasmids). CRISPR clusters contain sequences complementary to antecedent mobile elements and target invading nucleic acids. CRISPR clusters are transcribed and processed into CRISPR RNA (crRNA). Functions as a ssRNA-specific endoribonuclease. Involved in the integration of spacer DNA into the CRISPR cassette. The sequence is that of CRISPR-associated endoribonuclease Cas2 from Treponema denticola (strain ATCC 35405 / DSM 14222 / CIP 103919 / JCM 8153 / KCTC 15104).